The chain runs to 146 residues: Leptin (146 aa).

A disulfide bond links Cys-96 and Cys-146.

This sequence belongs to the leptin family.

It localises to the secreted. Its function is as follows. Key player in the regulation of energy balance and body weight control. Once released into the circulation, has central and peripheral effects by binding LEPR, found in many tissues, which results in the activation of several major signaling pathways. In the hypothalamus, acts as an appetite-regulating factor that induces a decrease in food intake and an increase in energy consumption by inducing anorexinogenic factors and suppressing orexigenic neuropeptides, also regulates bone mass and secretion of hypothalamo-pituitary-adrenal hormones. In the periphery, increases basal metabolism, influences reproductive function, regulates pancreatic beta-cell function and insulin secretion, is pro-angiogenic for endothelial cell and affects innate and adaptive immunity. In the arcuate nucleus of the hypothalamus, activates by depolarization POMC neurons inducing FOS and SOCS3 expression to release anorexigenic peptides and inhibits by hyperpolarization NPY neurons inducing SOCS3 with a consequent reduction on release of orexigenic peptides. In addition to its known satiety inducing effect, has a modulatory role in nutrient absorption. In the intestine, reduces glucose absorption by enterocytes by activating PKC and leading to a sequential activation of p38, PI3K and ERK signaling pathways which exerts an inhibitory effect on glucose absorption. Acts as a growth factor on certain tissues, through the activation of different signaling pathways increases expression of genes involved in cell cycle regulation such as CCND1, via JAK2-STAT3 pathway, or VEGFA, via MAPK1/3 and PI3K-AKT1 pathways. May also play an apoptotic role via JAK2-STAT3 pathway and up-regulation of BIRC5 expression. Pro-angiogenic, has mitogenic activity on vascular endothelial cells and plays a role in matrix remodeling by regulating the expression of matrix metalloproteinases (MMPs) and tissue inhibitors of metalloproteinases (TIMPs). In innate immunity, modulates the activity and function of neutrophils by increasing chemotaxis and the secretion of oxygen radicals. Increases phagocytosis by macrophages and enhances secretion of pro-inflammatory mediators. Increases cytotoxic ability of NK cells. Plays a pro-inflammatory role, in synergy with IL1B, by inducing NOS2 which promotes the production of IL6, IL8 and Prostaglandin E2, through a signaling pathway that involves JAK2, PI3K, MAP2K1/MEK1 and MAPK14/p38. In adaptive immunity, promotes the switch of memory T-cells towards T helper-1 cell immune responses. Increases CD4(+)CD25(-) T-cell proliferation and reduces autophagy during TCR (T-cell receptor) stimulation, through MTOR signaling pathway activation and BCL2 up-regulation. The chain is Leptin (LEP) from Ovis aries (Sheep).